The sequence spans 363 residues: Fructose-bisphosphate aldolase 1 (363 aa).

Position 34 (Asp-34) interacts with dihydroxyacetone phosphate. D-glyceraldehyde 3-phosphate-binding residues include Ser-36 and Thr-39. Arg-43 contacts beta-D-fructose 1,6-bisphosphate. Lys-107 serves as a coordination point for D-glyceraldehyde 3-phosphate. Position 146 (Lys-146) interacts with dihydroxyacetone phosphate. Glu-189 lines the D-glyceraldehyde 3-phosphate pocket. The Proton acceptor role is filled by Glu-189. Residues Lys-231, Ser-273, and Gly-274 each coordinate dihydroxyacetone phosphate. Lys-231 serves as the catalytic Schiff-base intermediate with dihydroxyacetone phosphate. Residues 273–275 (SGG) and Ser-301 each bind beta-D-fructose 1,6-bisphosphate. Gly-303 and Arg-304 together coordinate dihydroxyacetone phosphate. Arg-304 serves as a coordination point for beta-D-fructose 1,6-bisphosphate.

The protein belongs to the class I fructose-bisphosphate aldolase family. In terms of assembly, homotetramer. Component of a complex, at least composed of ald-1, microneme protein MIC2 and ACT1. Interacts with microneme protein MIC2 (via cytoplasmic tail). Interacts with ACT1 (F-actin).

It is found in the cytoplasm. The catalysed reaction is beta-D-fructose 1,6-bisphosphate = D-glyceraldehyde 3-phosphate + dihydroxyacetone phosphate. Its pathway is carbohydrate degradation; glycolysis; D-glyceraldehyde 3-phosphate and glycerone phosphate from D-glucose: step 4/4. Its function is as follows. Plays a key role in glycolysis by catalyzing the cleavage of fructose 1,6-bisphosphate into dihydroxyacetone phosphate and glyceraldehyde 3-phosphate. Forms a bridge between cell surface adhesins and the actin cytoskeleton. Required for parasite invasion of host cells. This is Fructose-bisphosphate aldolase 1 from Toxoplasma gondii.